The sequence spans 1484 residues: MIERGKFRSLTLINWNGFFARTFDLDELVTTLSGGNGAGKSTTMAAFVTALIPDLTLLHFRNTTEAGATSGSRDKGLHGKLKAGVCYSMLDTINSRHQRVVVGVRLQQVAGRDRKVDIKPFAIQGLPMSVQPTQLVTETLNERQARVLSLAELKDKLDEMEGVQFKQFNSITDYHSLMFDLGIIARRLRSASDRSKFYRLIEASLYGGISSAITRSLRDYLLPENSGVRKAFQDMEAALRENRLTLEAIRVTQSDRDLFKHLISEATDYVAADYMRHTNERRVHLDQALAFRRELYTSRKQLAAEQYKHVDMARELGEHNGAEGSLEADYQAASDHLNLVQTALRQQEKIERYEADLEELQIRLEEQNEVVAEAAEMQDENEARAEAAELEVDELKSQLADYQQALDVQQTRAIQYNQAISALARAKELCHLPDLTPESAAEWLDTFQAKEQEATEKLLSLEQKMSVAQTAHSQFEQAYQLVAAINGPLARSEAWDVARELLRDGVNQRHLAEQVQPLRMRLSELEQRLREQQEAERLLAEFCKRQGKNFDIDELEALHQELEARIASLSESVSSASEQRMALRQEQEQLQSRIQHLMQRAPVWLAAQNSLNQLSEQCGEEFTSSQEVTEYLQQLLEREREAIVERDEVGARKNAVDEEIERLSQPGGAEDQRLNALAERFGGVLLSEIYDDVSLEDAPYFSALYGPSRHAIVVPDLSQIAEQLEGLTDCPEDLYLIEGDPQSFDDSVFSVDELEKAVVVKIADRQWRYSRFPSLPIFGRAARENRIESLHAEREVLSERFATLSFDVQKTQRLHQAFSRFIGSHLSVAFEDDPEAEIRRLNGRRVELERALATHESDNQQQRLQFEQAKEGVSALNRLLPRLNLLADETLADRVDEIQERLDEAQEAARFVQQYGNQLAKLEPVVSVLQSDPEQFEQLKEDYAWSQQMQRDARQQAFALAEVVERRAHFSYSDSAEMLSGNSDLNEKLRQRLEQAEAERTRAREALRSHAAQLSQYSQVLASLKSSYDTKKELLNDLQRELQDIGVRADSGAEERARQRRDELHAQLSNNRSRRNQLEKALTFCEAEMENLTRKLRKLERDYHEMREQVVTAKAGWCAVMRMVKDNGVERRLHRRELAYLSADELRSMSDKALGALRLAVADNEHLRDVLRLSEDPKRPERKIQFFVAVYQHLRERIRQDIIRTDDPVEAIEQMEIELSRLTEELTSREQKLAISSRSVANIIRKTIQREQNRIRMLNQGLQSVSFGQVNSVRLNVNVRETHATLLDVLSEQQEQHQDLFNSNRLTFSEALAKLYQRLNPQIDMGQRTPQTIGEELLDYRNYLEMEVEVNRGSDGWLRAESGALSTGEAIGTGMSILVMVVQSWEDEARRLRGKDISPCRLLFLDEAARLDARSIATLFELCERLQMQLIIAAPENISPEKGTTYKLVRKVFQNTEHVHVVGLRGFAPQLPGTQTEDTPSEAS.

34–41 (GGNGAGKS) contributes to the ATP binding site. 3 coiled-coil regions span residues 326–418 (LEAD…QYNQ), 444–472 (LDTF…QTAH), and 509–602 (RHLA…QRAP). The tract at residues 666-783 (PGGAEDQRLN…SLPIFGRAAR (118 aa)) is flexible hinge. Coiled-coil stretches lie at residues 835 to 923 (EAEI…AKLE), 977 to 1116 (EMLS…AKAG), and 1209 to 1265 (VEAI…LQSV). A disordered region spans residues 1049–1074 (ADSGAEERARQRRDELHAQLSNNRSR). Basic and acidic residues predominate over residues 1051 to 1065 (SGAEERARQRRDELH).

The protein belongs to the SMC family. MukB subfamily. As to quaternary structure, homodimerization via its hinge domain. Binds to DNA via its C-terminal region. Interacts, and probably forms a ternary complex, with MukE and MukF via its C-terminal region. The complex formation is stimulated by calcium or magnesium. Interacts with tubulin-related protein FtsZ.

The protein localises to the cytoplasm. It is found in the nucleoid. Plays a central role in chromosome condensation, segregation and cell cycle progression. Functions as a homodimer, which is essential for chromosome partition. Involved in negative DNA supercoiling in vivo, and by this means organize and compact chromosomes. May achieve or facilitate chromosome segregation by condensation DNA from both sides of a centrally located replisome during cell division. This Salmonella dublin (strain CT_02021853) protein is Chromosome partition protein MukB.